The chain runs to 449 residues: Phosphoglucosamine mutase (449 aa).

Serine 100 serves as the catalytic Phosphoserine intermediate. Positions 100, 240, 242, and 244 each coordinate Mg(2+). At serine 100 the chain carries Phosphoserine.

This sequence belongs to the phosphohexose mutase family. It depends on Mg(2+) as a cofactor. In terms of processing, activated by phosphorylation.

It carries out the reaction alpha-D-glucosamine 1-phosphate = D-glucosamine 6-phosphate. Its function is as follows. Catalyzes the conversion of glucosamine-6-phosphate to glucosamine-1-phosphate. The chain is Phosphoglucosamine mutase from Clostridium novyi (strain NT).